Here is a 273-residue protein sequence, read N- to C-terminus: Putative peptidyl-prolyl cis-trans isomerase Cbf2 (273 aa).

The signal sequence occupies residues methionine 1–alanine 21. A PpiC domain is found at proline 131–asparagine 228.

It carries out the reaction [protein]-peptidylproline (omega=180) = [protein]-peptidylproline (omega=0). The sequence is that of Putative peptidyl-prolyl cis-trans isomerase Cbf2 (cbf2) from Campylobacter jejuni subsp. jejuni serotype O:2 (strain ATCC 700819 / NCTC 11168).